The following is a 149-amino-acid chain: MKVEVCSFSGSKVYPGAGRLFVRGDNKVFRFVNKKSESLFLQRKNPRRLSWTVLYRRMHKKGISEEHAKKRTRRTVKHQRGIVGANLDVIKEKRNQRPEVRAAARAAALKQRKDKRAASESEKKAIKAKSAASSARGQAIKNAKVAARR.

S50 is subject to Phosphoserine. The disordered stretch occupies residues 96 to 149 (QRPEVRAAARAAALKQRKDKRAASESEKKAIKAKSAASSARGQAIKNAKVAARR). The segment covering 116–125 (RAASESEKKA) has biased composition (basic and acidic residues).

The protein belongs to the eukaryotic ribosomal protein eL24 family. In terms of assembly, component of the large ribosomal subunit (LSU). Mature yeast ribosomes consist of a small (40S) and a large (60S) subunit. The 40S small subunit contains 1 molecule of ribosomal RNA (18S rRNA) and at least 33 different proteins. The large 60S subunit contains 3 rRNA molecules (25S, 5.8S and 5S rRNA) and at least 46 different proteins.

The protein resides in the cytoplasm. Component of the ribosome, a large ribonucleoprotein complex responsible for the synthesis of proteins in the cell. The small ribosomal subunit (SSU) binds messenger RNAs (mRNAs) and translates the encoded message by selecting cognate aminoacyl-transfer RNA (tRNA) molecules. The large subunit (LSU) contains the ribosomal catalytic site termed the peptidyl transferase center (PTC), which catalyzes the formation of peptide bonds, thereby polymerizing the amino acids delivered by tRNAs into a polypeptide chain. The nascent polypeptides leave the ribosome through a tunnel in the LSU and interact with protein factors that function in enzymatic processing, targeting, and the membrane insertion of nascent chains at the exit of the ribosomal tunnel. In Schizosaccharomyces pombe (strain 972 / ATCC 24843) (Fission yeast), this protein is Large ribosomal subunit protein eL24B (rpl2402).